The following is a 195-amino-acid chain: dTTP/UTP pyrophosphatase (195 aa).

Asp70 (proton acceptor) is an active-site residue.

It belongs to the Maf family. YhdE subfamily. The cofactor is a divalent metal cation.

Its subcellular location is the cytoplasm. The enzyme catalyses dTTP + H2O = dTMP + diphosphate + H(+). It catalyses the reaction UTP + H2O = UMP + diphosphate + H(+). Its function is as follows. Nucleoside triphosphate pyrophosphatase that hydrolyzes dTTP and UTP. May have a dual role in cell division arrest and in preventing the incorporation of modified nucleotides into cellular nucleic acids. The sequence is that of dTTP/UTP pyrophosphatase from Methanococcoides burtonii (strain DSM 6242 / NBRC 107633 / OCM 468 / ACE-M).